We begin with the raw amino-acid sequence, 275 residues long: Large ribosomal subunit protein uL2 (275 aa).

The span at 35 to 49 (DSQSSTAGRNNNGRI) shows a compositional bias: polar residues. Disordered stretches follow at residues 35 to 59 (DSQSSTAGRNNNGRITTRHKGGGHK) and 224 to 275 (AMNP…RHKR). Positions 50–59 (TTRHKGGGHK) are enriched in basic residues.

The protein belongs to the universal ribosomal protein uL2 family. Part of the 50S ribosomal subunit. Forms a bridge to the 30S subunit in the 70S ribosome.

Functionally, one of the primary rRNA binding proteins. Required for association of the 30S and 50S subunits to form the 70S ribosome, for tRNA binding and peptide bond formation. It has been suggested to have peptidyltransferase activity; this is somewhat controversial. Makes several contacts with the 16S rRNA in the 70S ribosome. This Burkholderia orbicola (strain AU 1054) protein is Large ribosomal subunit protein uL2.